A 538-amino-acid chain; its full sequence is Mevalonate kinase erg12 (538 aa).

Residues 1-87 form a disordered region; it reads MGNPRGRRTN…RNMSRKPSSP (87 aa). The span at 9–29 shows a compositional bias: polar residues; the sequence is TNGSIKTSKGTQRGTVSNLLS. Residues 57–69 are compositionally biased toward low complexity; that stretch reads TTPSTTESTLKTT. Residues Lys-99, Ser-231, and 236–242 each bind ATP; that span reads GAGLGSS. 2 residues coordinate Mg(2+): Ser-242 and Glu-287. Catalysis depends on Asp-298, which acts as the Proton acceptor.

This sequence belongs to the GHMP kinase family. Mevalonate kinase subfamily. Homodimer. Mg(2+) is required as a cofactor.

Its subcellular location is the cytoplasm. It is found in the cytosol. The catalysed reaction is (R)-mevalonate + ATP = (R)-5-phosphomevalonate + ADP + H(+). Its pathway is isoprenoid biosynthesis; isopentenyl diphosphate biosynthesis via mevalonate pathway; isopentenyl diphosphate from (R)-mevalonate: step 1/3. Mevalonate kinase; part of the second module of ergosterol biosynthesis pathway that includes the middle steps of the pathway. Erg12 converts mevalonate into 5-phosphomevalonate. The second module is carried out in the vacuole and involves the formation of farnesyl diphosphate, which is also an important intermediate in the biosynthesis of ubiquinone, dolichol, heme and prenylated proteins. Activity by the mevalonate kinase erg12 (AFUA_4G07780) first converts mevalonate into 5-phosphomevalonate. 5-phosphomevalonate is then further converted to 5-diphosphomevalonate by the phosphomevalonate kinase erg8 (AFUA_5G10680). The diphosphomevalonate decarboxylase mvd1 (AFUA_4G07130) then produces isopentenyl diphosphate. The isopentenyl-diphosphate delta-isomerase idi1 (AFUA_6G11160) then catalyzes the 1,3-allylic rearrangement of the homoallylic substrate isopentenyl (IPP) to its highly electrophilic allylic isomer, dimethylallyl diphosphate (DMAPP). Finally the farnesyl diphosphate synthase erg20 (AFUA_5G02450) catalyzes the sequential condensation of isopentenyl pyrophosphate with dimethylallyl pyrophosphate, and then with the resultant geranylpyrophosphate to the ultimate product farnesyl pyrophosphate. This chain is Mevalonate kinase erg12, found in Aspergillus fumigatus (strain ATCC MYA-4609 / CBS 101355 / FGSC A1100 / Af293) (Neosartorya fumigata).